We begin with the raw amino-acid sequence, 486 residues long: NADH-quinone oxidoreductase subunit N (486 aa).

Transmembrane regions (helical) follow at residues 5-25, 41-61, 77-97, 118-138, 165-185, 209-229, 245-265, 275-295, 304-324, 335-355, 380-400, 413-433, and 458-478; these read IGLSDVLLISPMIALFLASLL, LITLGQALMGIVAAVVLLVVF, GVTQWMGIIALAGAGAAMVMM, SAVGMLILVSAVDLLMVFIGL, YFILGSFASAIFLYGVAFIFG, FLFGVTFVILGFCFKVSIAPF, TAFMATAVKTVSFAAFLRIIA, LFDILQWMAVITMIVGNAAAI, IAYSSVAHSGYLMVGLITAGV, VIFYLLAYGLMTIGAFAIAAM, ALCLTVFLLSLAGIPPTLGFF, GLLWLAIWGMLNSVIGVYYYL, and VTAVVMALAIVLMGFVSGPIF.

The protein belongs to the complex I subunit 2 family. As to quaternary structure, NDH-1 is composed of 14 different subunits. Subunits NuoA, H, J, K, L, M, N constitute the membrane sector of the complex.

It localises to the cell inner membrane. It catalyses the reaction a quinone + NADH + 5 H(+)(in) = a quinol + NAD(+) + 4 H(+)(out). Functionally, NDH-1 shuttles electrons from NADH, via FMN and iron-sulfur (Fe-S) centers, to quinones in the respiratory chain. The immediate electron acceptor for the enzyme in this species is believed to be ubiquinone. Couples the redox reaction to proton translocation (for every two electrons transferred, four hydrogen ions are translocated across the cytoplasmic membrane), and thus conserves the redox energy in a proton gradient. This chain is NADH-quinone oxidoreductase subunit N, found in Bdellovibrio bacteriovorus (strain ATCC 15356 / DSM 50701 / NCIMB 9529 / HD100).